Consider the following 159-residue polypeptide: SsrA-binding protein (159 aa).

The interval 138 to 159 is disordered; it reads KRDTLKDKDWQRQKERMMKHSV.

Belongs to the SmpB family.

It is found in the cytoplasm. Its function is as follows. Required for rescue of stalled ribosomes mediated by trans-translation. Binds to transfer-messenger RNA (tmRNA), required for stable association of tmRNA with ribosomes. tmRNA and SmpB together mimic tRNA shape, replacing the anticodon stem-loop with SmpB. tmRNA is encoded by the ssrA gene; the 2 termini fold to resemble tRNA(Ala) and it encodes a 'tag peptide', a short internal open reading frame. During trans-translation Ala-aminoacylated tmRNA acts like a tRNA, entering the A-site of stalled ribosomes, displacing the stalled mRNA. The ribosome then switches to translate the ORF on the tmRNA; the nascent peptide is terminated with the 'tag peptide' encoded by the tmRNA and targeted for degradation. The ribosome is freed to recommence translation, which seems to be the essential function of trans-translation. This chain is SsrA-binding protein, found in Alteromonas mediterranea (strain DSM 17117 / CIP 110805 / LMG 28347 / Deep ecotype).